Consider the following 154-residue polypeptide: Snaclec salmorin subunit A (154 aa).

Residues 1–23 (MGRFIFVSFGLLVVFLSLSGTGA) form the signal peptide. Intrachain disulfides connect Cys-27–Cys-38, Cys-55–Cys-152, and Cys-127–Cys-144. The 120-residue stretch at 34 to 153 (NNGHCYQAFN…CGQRNPFVCE (120 aa)) folds into the C-type lectin domain. Residues Ser-66, Glu-68, and Glu-72 each contribute to the Ca(2+) site. A Ca(2+)-binding site is contributed by Glu-153.

It belongs to the snaclec family. As to quaternary structure, heterodimer of subunits A and B; disulfide-linked. As to expression, expressed by the venom gland.

It is found in the secreted. Its function is as follows. Inhibits thrombin-induced fibrinogen clotting and factor Xa-induced prothrombin activation. Binds to thrombin and prothrombin exosites. This chain is Snaclec salmorin subunit A, found in Gloydius brevicauda (Korean slamosa snake).